Here is a 723-residue protein sequence, read N- to C-terminus: 1,3-alpha-isomaltosidase (723 aa).

Asp451 functions as the Nucleophile in the catalytic mechanism. The active site involves Glu454. The active-site Proton donor is the Asp516. Residue His581 coordinates substrate.

Belongs to the glycosyl hydrolase 31 family.

Its subcellular location is the cytoplasm. The catalysed reaction is cyclobis-(1-&gt;3)-alpha-D-isomaltosyl + 2 H2O = 2 isomaltose. Functionally, involved in the intracellular degradation of the cyclic tetrasaccharide cyclobis-(1-6)-alpha-nigerosyl (CNN) formed extracellularly from starch. Catalyzes the hydrolysis of the alpha-1,3-glucosidic linkage of cyclobis-(1-6)-alpha-nigerosyl (CNN) to yield isomaltose via a possible linear tetrasaccharide. It has a strong preference for the alpha-(1-3)-isomaltosyl moiety. The protein is 1,3-alpha-isomaltosidase of Kribbella flavida (strain DSM 17836 / JCM 10339 / NBRC 14399).